Consider the following 193-residue polypeptide: Nucleoside triphosphate pyrophosphatase (193 aa).

The Proton acceptor role is filled by Asp70.

This sequence belongs to the Maf family. The cofactor is a divalent metal cation.

It is found in the cytoplasm. The catalysed reaction is a ribonucleoside 5'-triphosphate + H2O = a ribonucleoside 5'-phosphate + diphosphate + H(+). It catalyses the reaction a 2'-deoxyribonucleoside 5'-triphosphate + H2O = a 2'-deoxyribonucleoside 5'-phosphate + diphosphate + H(+). Its function is as follows. Nucleoside triphosphate pyrophosphatase. May have a dual role in cell division arrest and in preventing the incorporation of modified nucleotides into cellular nucleic acids. In Anaplasma phagocytophilum (strain HZ), this protein is Nucleoside triphosphate pyrophosphatase.